We begin with the raw amino-acid sequence, 264 residues long: Thymidylate synthase (264 aa).

Arg21 contributes to the dUMP binding site. Position 51 (His51) interacts with (6R)-5,10-methylene-5,6,7,8-tetrahydrofolate. DUMP is bound at residue 126–127 (RR). Cys146 serves as the catalytic Nucleophile. DUMP-binding positions include 166-169 (RSCD), Asn177, and 207-209 (HLY). Asp169 contacts (6R)-5,10-methylene-5,6,7,8-tetrahydrofolate. Position 263 (Ala263) interacts with (6R)-5,10-methylene-5,6,7,8-tetrahydrofolate.

It belongs to the thymidylate synthase family. Bacterial-type ThyA subfamily. In terms of assembly, homodimer.

The protein resides in the cytoplasm. The catalysed reaction is dUMP + (6R)-5,10-methylene-5,6,7,8-tetrahydrofolate = 7,8-dihydrofolate + dTMP. Its pathway is pyrimidine metabolism; dTTP biosynthesis. In terms of biological role, catalyzes the reductive methylation of 2'-deoxyuridine-5'-monophosphate (dUMP) to 2'-deoxythymidine-5'-monophosphate (dTMP) while utilizing 5,10-methylenetetrahydrofolate (mTHF) as the methyl donor and reductant in the reaction, yielding dihydrofolate (DHF) as a by-product. This enzymatic reaction provides an intracellular de novo source of dTMP, an essential precursor for DNA biosynthesis. The chain is Thymidylate synthase from Escherichia coli O9:H4 (strain HS).